Reading from the N-terminus, the 856-residue chain is DNA mismatch repair protein MutS (856 aa).

Position 618–625 (618–625 (GPNMGGKS)) interacts with ATP.

It belongs to the DNA mismatch repair MutS family.

In terms of biological role, this protein is involved in the repair of mismatches in DNA. It is possible that it carries out the mismatch recognition step. This protein has a weak ATPase activity. The chain is DNA mismatch repair protein MutS from Shewanella baltica (strain OS155 / ATCC BAA-1091).